The sequence spans 254 residues: Imidazole glycerol phosphate synthase subunit HisF (254 aa).

Catalysis depends on residues Asp11 and Asp130.

The protein belongs to the HisA/HisF family. In terms of assembly, heterodimer of HisH and HisF.

The protein localises to the cytoplasm. The enzyme catalyses 5-[(5-phospho-1-deoxy-D-ribulos-1-ylimino)methylamino]-1-(5-phospho-beta-D-ribosyl)imidazole-4-carboxamide + L-glutamine = D-erythro-1-(imidazol-4-yl)glycerol 3-phosphate + 5-amino-1-(5-phospho-beta-D-ribosyl)imidazole-4-carboxamide + L-glutamate + H(+). Its pathway is amino-acid biosynthesis; L-histidine biosynthesis; L-histidine from 5-phospho-alpha-D-ribose 1-diphosphate: step 5/9. Functionally, IGPS catalyzes the conversion of PRFAR and glutamine to IGP, AICAR and glutamate. The HisF subunit catalyzes the cyclization activity that produces IGP and AICAR from PRFAR using the ammonia provided by the HisH subunit. The polypeptide is Imidazole glycerol phosphate synthase subunit HisF (Halorhodospira halophila (strain DSM 244 / SL1) (Ectothiorhodospira halophila (strain DSM 244 / SL1))).